The following is a 60-amino-acid chain: Metallothionein A (60 aa).

The segment at Met1–Cys28 is beta. 20 residues coordinate a divalent metal cation: Cys4, Cys6, Cys12, Cys14, Cys18, Cys20, Cys23, Cys25, Cys28, Cys32, Cys33, Cys35, Cys36, Cys40, Cys43, Cys47, Cys49, Cys54, Cys58, and Cys59. An alpha region spans residues Lys29–Gln60.

It belongs to the metallothionein superfamily. Type 1 family.

Functionally, metallothioneins have a high content of cysteine residues that bind various heavy metals. This chain is Metallothionein A (mta), found in Cyprinodon sp. (Pupfish).